The sequence spans 87 residues: MTGKAPFFVILIAALLLLSSFFFGEVKAISTKQPKHRKLGNREGDENRSNEIVVQMKARVKRSKSKRGPQKKEPYKKPPCSPPTHPA.

An N-terminal signal peptide occupies residues 1–28 (MTGKAPFFVILIAALLLLSSFFFGEVKA). The segment at 32-87 (KQPKHRKLGNREGDENRSNEIVVQMKARVKRSKSKRGPQKKEPYKKPPCSPPTHPA) is disordered. Over residues 40 to 49 (GNREGDENRS) the composition is skewed to basic and acidic residues. An SCOOP motif motif is present at residues 51–71 (EIVVQMKARVKRSKSKRGPQK). The segment covering 58–69 (ARVKRSKSKRGP) has biased composition (basic residues). The SxS motif essential for MIK2 binding signature appears at 63 to 65 (SKS). The segment covering 77-87 (KPPCSPPTHPA) has biased composition (pro residues).

This sequence belongs to the serine rich endogenous peptide (SCOOP) phytocytokine family. Interacts with MIK2 (via extracellular leucine-rich repeat domain); this interaction triggers the formation of complex between MIK2 and the BAK1/SERK3 and SERK4 coreceptors, and subsequent BAK1 activation by phosphorylation.

Its subcellular location is the cell membrane. The protein localises to the secreted. The protein resides in the extracellular space. It is found in the apoplast. Brassicaceae-specific phytocytokine (plant endogenous peptide released into the apoplast) perceived by MIK2 in a BAK1/SERK3 and SERK4 coreceptors-dependent manner, that modulates various physiological and antimicrobial processes including growth prevention and reactive oxygen species (ROS) response regulation. This Arabidopsis thaliana (Mouse-ear cress) protein is Serine rich endogenous peptide 17.